We begin with the raw amino-acid sequence, 417 residues long: NADH-quinone oxidoreductase subunit D (417 aa).

It belongs to the complex I 49 kDa subunit family. In terms of assembly, NDH-1 is composed of 14 different subunits. Subunits NuoB, C, D, E, F, and G constitute the peripheral sector of the complex.

The protein resides in the cell inner membrane. It catalyses the reaction a quinone + NADH + 5 H(+)(in) = a quinol + NAD(+) + 4 H(+)(out). NDH-1 shuttles electrons from NADH, via FMN and iron-sulfur (Fe-S) centers, to quinones in the respiratory chain. The immediate electron acceptor for the enzyme in this species is believed to be ubiquinone. Couples the redox reaction to proton translocation (for every two electrons transferred, four hydrogen ions are translocated across the cytoplasmic membrane), and thus conserves the redox energy in a proton gradient. This chain is NADH-quinone oxidoreductase subunit D, found in Methylobacillus flagellatus (strain ATCC 51484 / DSM 6875 / VKM B-1610 / KT).